The sequence spans 1161 residues: Cell wall protein DAN4 (1161 aa).

Residues Met-1–Ala-19 form the signal peptide. Disordered regions lie at residues Thr-123–Ser-309, Thr-326–Asn-345, Thr-354–Gly-547, and Ser-691–Ala-713. Residues Thr-134–Thr-286 form a 46 X 3 AA tandem repeats of T-[SP]-T region. Low complexity predominate over residues Thr-354–Ser-372. 14 repeat units span residues Ala-373 to Ser-384, Val-385 to Ser-396, Ala-397 to Ser-408, Val-409 to Ser-420, Ala-421 to Ser-432, Val-433 to Ser-444, Ala-445 to Ser-456, Val-457 to Ser-468, Ala-469 to Ser-480, Val-481 to Ser-492, Ala-493 to Ser-504, Val-505 to Ser-516, Ala-517 to Ser-528, and Val-529 to Thr-540. The 14 X 12 AA approximate tandem repeats stretch occupies residues Ala-373–Thr-540. The span at Ala-373 to Gly-547 shows a compositional bias: polar residues. Tandem repeats lie at residues Glu-826 to Glu-913 and Glu-914 to Glu-1001. Residues Glu-826–Ala-1040 are 2.5 X 88 AA approximate tandem repeats. A 2-3; truncated repeat occupies Glu-1002–Ala-1040. Asn-1137 carries GPI-anchor amidated asparagine lipidation. Residues Gly-1138–Leu-1161 constitute a propeptide, removed in mature form.

It belongs to the SRP1/TIP1 family. Extensively O-glycosylated. In terms of processing, the GPI-anchor is attached to the protein in the endoplasmic reticulum and serves to target the protein to the cell surface. There, the glucosamine-inositol phospholipid moiety is cleaved off and the GPI-modified mannoprotein is covalently attached via its lipidless GPI glycan remnant to the 1,6-beta-glucan of the outer cell wall layer.

It localises to the secreted. The protein resides in the cell wall. It is found in the cell membrane. Functionally, component of the cell wall. The sequence is that of Cell wall protein DAN4 from Saccharomyces cerevisiae (strain ATCC 204508 / S288c) (Baker's yeast).